We begin with the raw amino-acid sequence, 405 residues long: Multidrug resistance protein MdtA (405 aa).

The N-terminal stretch at 1–22 is a signal peptide; it reads MKTPRRFPLIALTVAAVLTAAA. Residues 35–52 are compositionally biased toward polar residues; sequence VQNRQGTEQQRASNSQGS. Residues 35–62 form a disordered region; the sequence is VQNRQGTEQQRASNSQGSAKRAGNAPPV.

This sequence belongs to the membrane fusion protein (MFP) (TC 8.A.1) family. As to quaternary structure, part of a tripartite efflux system composed of MdtA, MdtB and MdtC.

The protein resides in the cell inner membrane. The sequence is that of Multidrug resistance protein MdtA from Erwinia amylovora (strain ATCC 49946 / CCPPB 0273 / Ea273 / 27-3).